The primary structure comprises 477 residues: MVNTMKTKLLCVLLLCGAVFSLPRQETYRQLARGSRAYGVACKDEITQMTYRRQESWLRPEVRSKRVEHCQCDRGQARCHTVPVNSCSEPRCFNGGTCWQAVYFSDFVCQCPAGYTGKRCEVDTRATCYEGQGVTYRGTWSTAESRVECINWNSSLLTRRTYNGRMPDAFNLGLGNHNYCRNPNGAPKPWCYVIKAGKFTSESCSVPVCSKATCGLRKYKEPQLHSTGGLFTDITSHPWQAAIFAQNRRSSGERFLCGGILISSCWVLTAAHCFQESYLPDQLKVVLGRTYRVKPGEEEQTFKVKKYIVHKEFDDDTYNNDIALLQLKSDSPQCAQESDSVRAICLPEANLQLPDWTECELSGYGKHKSSSPFYSEQLKEGHVRLYPSSRCAPKFLFNKTVTNNMLCAGDTRSGEIYPNVHDACQGDSGGPLVCMNDNHMTLLGIISWGVGCGEKDVPGVYTKVTNYLGWIRDNMHL.

The N-terminal stretch at 1–36 is a signal peptide; sequence MVNTMKTKLLCVLLLCGAVFSLPRQETYRQLARGSR. The Fibronectin type-I domain maps to 40-82; the sequence is VACKDEITQMTYRRQESWLRPEVRSKRVEHCQCDRGQARCHTV. Cystine bridges form between cysteine 42–cysteine 72, cysteine 70–cysteine 79, cysteine 87–cysteine 98, cysteine 92–cysteine 109, cysteine 111–cysteine 120, cysteine 128–cysteine 209, cysteine 149–cysteine 191, cysteine 180–cysteine 204, cysteine 214–cysteine 345, cysteine 257–cysteine 273, cysteine 265–cysteine 334, cysteine 359–cysteine 434, cysteine 391–cysteine 407, and cysteine 424–cysteine 452. The region spanning 83-121 is the EGF-like domain; that stretch reads PVNSCSEPRCFNGGTCWQAVYFSDFVCQCPAGYTGKRCE. Residues 128–209 form the Kringle domain; that stretch reads CYEGQGVTYR…TSESCSVPVC (82 aa). Asparagine 153 is a glycosylation site (N-linked (GlcNAc...) asparagine). Residues 226–476 enclose the Peptidase S1 domain; it reads STGGLFTDIT…YLGWIRDNMH (251 aa). Residues histidine 272 and aspartate 321 each act as charge relay system in the active site. Asparagine 398 carries an N-linked (GlcNAc...) asparagine glycan. Serine 428 functions as the Charge relay system in the catalytic mechanism.

This sequence belongs to the peptidase S1 family. In terms of assembly, monomer.

The protein localises to the secreted. It carries out the reaction Specific cleavage of Arg-|-Val bond in plasminogen to form plasmin.. With respect to regulation, activity toward plasminogen is stimulated in the presence of fibrin I. Probably essential to support the feeding habits of this exclusively haematophagous animal. Potent thrombolytic agent. This is Salivary plasminogen activator alpha 1 from Desmodus rotundus (Vampire bat).